Reading from the N-terminus, the 290-residue chain is Endonuclease 2 (290 aa).

The N-terminal stretch at 1 to 27 (MANQKGLHVVMMIITVWLLYAAPNIHG) is a signal peptide. Residues Trp-28 and His-33 each coordinate a divalent metal cation. 28 to 33 (WGKEGH) is a binding site for substrate. An intrachain disulfide couples Cys-37 to Cys-68. The a divalent metal cation site is built by Asp-72 and His-85. Substrate-binding positions include 72-76 (DRVKF), 85-88 (HYIN), and 94-99 (SYQYNR). 3 disulfides stabilise this stretch: Cys-93–Cys-245, Cys-101–Cys-111, and Cys-226–Cys-232. Substrate contacts are provided by Asn-118 and Tyr-136. N-linked (GlcNAc...) asparagine glycosylation is present at Asn-118. N-linked (GlcNAc...) asparagine glycosylation occurs at Asn-137. Positions 147, 151, 157, 181, and 185 each coordinate a divalent metal cation. A substrate binding region spans residues 147 to 196 (HFMGDIHQPLHVSYASDKGGNTIEVHWYTRKANLHHIWDSNIIETAEADL). Asn-211 is a glycosylation site (N-linked (GlcNAc...) asparagine). Residues 283 to 290 (ATLNRIFG) constitute a propeptide, removed in mature form.

This sequence belongs to the nuclease type I family. As to quaternary structure, monomer. It depends on Mn(2+) as a cofactor. Ca(2+) is required as a cofactor. Requires Zn(2+) as cofactor. N-glycosylation is required for enzymatic stability and activity.

It carries out the reaction Endonucleolytic cleavage to 5'-phosphomononucleotide and 5'-phosphooligonucleotide end-products.. SsDNase activity is inhibited by the divalent cation chelator EDTA and the reducing agent DTT. Divalent metal ions (e.g. Ca(2+), Mg(2+) and Zn(2+)) and DTT represses RNase activity. RNase activity is enhanced by EDTA. Also repressed by vanadate (VO(4)(3-)) and phosphate (PO(4)(3-)) by occupying the active site. In terms of biological role, endonuclease mostly active on RNA and ssDNA, and to a lower extent, on dsDNA. Can cleave mismatch regions in heteroduplex DNA containing single base pair mismatches or insertion/deletion bases. In contradiction with PubMed:22506810, cannot hydrolyze single-stranded DNA and does not cleave mismatches. This is Endonuclease 2 from Arabidopsis thaliana (Mouse-ear cress).